The primary structure comprises 173 residues: Disulfide bond formation protein B 2 (173 aa).

Over 1 to 9 (MSLAGSRLL) the chain is Cytoplasmic. Residues 10 to 26 (FSLVFLVGALASWAAFN) traverse the membrane as a helical segment. The Periplasmic portion of the chain corresponds to 27-44 (LQTGGGLESCSLWSVQRL). Residues 45 to 61 (LLLALGGVNLLAVIQGP) form a helical membrane-spanning segment. Over 62 to 67 (GRVGRA) the chain is Cytoplasmic. The helical transmembrane segment at 68-85 (VYWGLNLLLGLLGVVTAG) threads the bilayer. The Periplasmic segment spans residues 86–142 (RHVLLQNIPSEQLLACLPDMSFMLRQLSWWQALKLTFMGTSDCAEVTWTLLDMSLPE). A disulfide bond links C101 and C128. A helical membrane pass occupies residues 143–161 (WSLLFFVIMLIFSGYRLWR). The Cytoplasmic segment spans residues 162 to 173 (QLRGARKAVALP).

It belongs to the DsbB family.

The protein localises to the cell inner membrane. Functionally, required for disulfide bond formation in some periplasmic proteins. Acts by oxidizing the DsbA protein. The sequence is that of Disulfide bond formation protein B 2 from Pseudomonas fluorescens (strain ATCC BAA-477 / NRRL B-23932 / Pf-5).